Reading from the N-terminus, the 295-residue chain is Diaminopimelate epimerase (295 aa).

Substrate is bound by residues Asn-13 and Asn-69. Cys-78 acts as the Proton donor in catalysis. Substrate contacts are provided by residues 79 to 80 (GN), Asn-173, Asn-212, and 230 to 231 (ER). Residue Cys-239 is the Proton acceptor of the active site. 240-241 (GT) lines the substrate pocket.

This sequence belongs to the diaminopimelate epimerase family. In terms of assembly, homodimer.

Its subcellular location is the cytoplasm. It carries out the reaction (2S,6S)-2,6-diaminopimelate = meso-2,6-diaminopimelate. Its pathway is amino-acid biosynthesis; L-lysine biosynthesis via DAP pathway; DL-2,6-diaminopimelate from LL-2,6-diaminopimelate: step 1/1. In terms of biological role, catalyzes the stereoinversion of LL-2,6-diaminopimelate (L,L-DAP) to meso-diaminopimelate (meso-DAP), a precursor of L-lysine. In Methanococcus aeolicus (strain ATCC BAA-1280 / DSM 17508 / OCM 812 / Nankai-3), this protein is Diaminopimelate epimerase.